Consider the following 45-residue polypeptide: Metallothionein-like protein 1C (45 aa).

This sequence belongs to the metallothionein superfamily. Type 15 family. In terms of tissue distribution, widely expressed at low levels.

In terms of biological role, metallothioneins have a high content of cysteine residues that bind various heavy metals. Confers tolerance to cadmium (Cd) and plays a role in Cd and zinc (Zn) homeostasis. The protein is Metallothionein-like protein 1C (MT1C) of Arabidopsis thaliana (Mouse-ear cress).